We begin with the raw amino-acid sequence, 828 residues long: Periplasmic nitrate reductase (828 aa).

Positions 1–31 (MKLSRRSFMKANAVAAAAAAAGLSVPGVARA) form a signal peptide, tat-type signal. The 4Fe-4S Mo/W bis-MGD-type domain maps to 39-95 (IKWDKAPCRFCGTGCGVLVGTQQGRVVACQGDPDAPVNRGLNCIKGYFLPKIMYGKD). [4Fe-4S] cluster contacts are provided by Cys-46, Cys-49, Cys-53, and Cys-81. Mo-bis(molybdopterin guanine dinucleotide) is bound by residues Lys-83, Gln-150, Asn-175, Cys-179, 212–219 (WGANMAEM), 243–247 (STYQH), 262–264 (QSD), Met-372, Gln-376, Asn-482, 508–509 (SD), Lys-531, Asp-558, and 718–727 (TGRVLEHWHT). A substrate-binding site is contributed by Phe-794. The Mo-bis(molybdopterin guanine dinucleotide) site is built by Asn-802 and Lys-819.

The protein belongs to the prokaryotic molybdopterin-containing oxidoreductase family. NasA/NapA/NarB subfamily. Component of the periplasmic nitrate reductase NapAB complex composed of NapA and NapB. [4Fe-4S] cluster is required as a cofactor. Requires Mo-bis(molybdopterin guanine dinucleotide) as cofactor. Predicted to be exported by the Tat system. The position of the signal peptide cleavage has not been experimentally proven.

The protein resides in the periplasm. The enzyme catalyses 2 Fe(II)-[cytochrome] + nitrate + 2 H(+) = 2 Fe(III)-[cytochrome] + nitrite + H2O. Functionally, catalytic subunit of the periplasmic nitrate reductase complex NapAB. Receives electrons from NapB and catalyzes the reduction of nitrate to nitrite. This Shigella flexneri serotype 5b (strain 8401) protein is Periplasmic nitrate reductase.